The chain runs to 457 residues: Bifunctional protein GlmU (457 aa).

Residues 1–227 (MTQLSVVILA…FMEVEGANNR (227 aa)) are pyrophosphorylase. Residues 9-12 (LAAG), K23, Q74, 79-80 (GT), 101-103 (YGD), G138, E152, N167, and N225 contribute to the UDP-N-acetyl-alpha-D-glucosamine site. D103 serves as a coordination point for Mg(2+). N225 contacts Mg(2+). Positions 228–248 (LQLAALERFYQKTQAEKLLLA) are linker. The segment at 249–457 (GVRLIDPARF…QRPTKKKIAD (209 aa)) is N-acetyltransferase. 2 residues coordinate UDP-N-acetyl-alpha-D-glucosamine: R331 and K349. H361 (proton acceptor) is an active-site residue. The UDP-N-acetyl-alpha-D-glucosamine site is built by Y364 and N375. Acetyl-CoA is bound by residues A378, 384-385 (NY), S403, A421, and R438.

This sequence in the N-terminal section; belongs to the N-acetylglucosamine-1-phosphate uridyltransferase family. The protein in the C-terminal section; belongs to the transferase hexapeptide repeat family. As to quaternary structure, homotrimer. It depends on Mg(2+) as a cofactor.

Its subcellular location is the cytoplasm. It catalyses the reaction alpha-D-glucosamine 1-phosphate + acetyl-CoA = N-acetyl-alpha-D-glucosamine 1-phosphate + CoA + H(+). The catalysed reaction is N-acetyl-alpha-D-glucosamine 1-phosphate + UTP + H(+) = UDP-N-acetyl-alpha-D-glucosamine + diphosphate. Its pathway is nucleotide-sugar biosynthesis; UDP-N-acetyl-alpha-D-glucosamine biosynthesis; N-acetyl-alpha-D-glucosamine 1-phosphate from alpha-D-glucosamine 6-phosphate (route II): step 2/2. The protein operates within nucleotide-sugar biosynthesis; UDP-N-acetyl-alpha-D-glucosamine biosynthesis; UDP-N-acetyl-alpha-D-glucosamine from N-acetyl-alpha-D-glucosamine 1-phosphate: step 1/1. It participates in bacterial outer membrane biogenesis; LPS lipid A biosynthesis. Its function is as follows. Catalyzes the last two sequential reactions in the de novo biosynthetic pathway for UDP-N-acetylglucosamine (UDP-GlcNAc). The C-terminal domain catalyzes the transfer of acetyl group from acetyl coenzyme A to glucosamine-1-phosphate (GlcN-1-P) to produce N-acetylglucosamine-1-phosphate (GlcNAc-1-P), which is converted into UDP-GlcNAc by the transfer of uridine 5-monophosphate (from uridine 5-triphosphate), a reaction catalyzed by the N-terminal domain. The protein is Bifunctional protein GlmU of Actinobacillus pleuropneumoniae serotype 5b (strain L20).